A 707-amino-acid chain; its full sequence is Lipase maturation factor 2 (707 aa).

The next 10 membrane-spanning stretches (helical) occupy residues 10–30 (AFLWGLSGIYLFAFVSLYVQI), 78–98 (MELICLLGALLSLGALLFSCL), 102–122 (LVFLLLWVFYLSLYQVGQVFL), 126–146 (WDSLLLETGFLAILVAPLHAM), 158–178 (GVTFWLTRWLLFRLMFASGVV), 220–240 (FSVVATFFIEIGVPWLFFLPF), 256–276 (ILIIITGNYNFFNLLTIVLCC), 309–329 (LVSLLEIPIFGLLVFWTVKYF), 358–378 (ITFPSIWIAAASLGWEILKGM), and 395–415 (LQWLMFSCAAAAMFTISLVPY). N-linked (GlcNAc...) asparagine glycosylation is present at Asn483. Residues 634 to 654 (LLLHSFIFGIFTIYFLQAMFG) traverse the membrane as a helical segment. Residues 661–707 (VAKQRHSMPPNEKKKQKPNSGQGESASSKSSGHGTDTVRRNKKNEKS) are disordered. Residues 680–694 (SGQGESASSKSSGHG) show a composition bias toward low complexity. Residues 696–707 (DTVRRNKKNEKS) are compositionally biased toward basic and acidic residues.

Belongs to the lipase maturation factor family.

It localises to the endoplasmic reticulum membrane. Functionally, involved in the maturation of specific proteins in the endoplasmic reticulum. This chain is Lipase maturation factor 2 (lmf2), found in Xenopus laevis (African clawed frog).